Reading from the N-terminus, the 269-residue chain is 5'-nucleotidase SurE (269 aa).

A divalent metal cation is bound by residues aspartate 11, aspartate 12, serine 43, and asparagine 101.

The protein belongs to the SurE nucleotidase family. The cofactor is a divalent metal cation.

The protein resides in the cytoplasm. The catalysed reaction is a ribonucleoside 5'-phosphate + H2O = a ribonucleoside + phosphate. In terms of biological role, nucleotidase that shows phosphatase activity on nucleoside 5'-monophosphates. This chain is 5'-nucleotidase SurE, found in Synechococcus sp. (strain CC9605).